The sequence spans 215 residues: 3-isopropylmalate dehydratase small subunit (215 aa).

Belongs to the LeuD family. LeuD type 1 subfamily. As to quaternary structure, heterodimer of LeuC and LeuD.

The enzyme catalyses (2R,3S)-3-isopropylmalate = (2S)-2-isopropylmalate. The protein operates within amino-acid biosynthesis; L-leucine biosynthesis; L-leucine from 3-methyl-2-oxobutanoate: step 2/4. Its function is as follows. Catalyzes the isomerization between 2-isopropylmalate and 3-isopropylmalate, via the formation of 2-isopropylmaleate. The protein is 3-isopropylmalate dehydratase small subunit of Stutzerimonas stutzeri (strain A1501) (Pseudomonas stutzeri).